Reading from the N-terminus, the 369-residue chain is Glutamate 5-kinase (369 aa).

An ATP-binding site is contributed by K9. Residues S49, D136, and N148 each coordinate substrate. ATP contacts are provided by residues 168 to 169 and 210 to 216; these read TD and TGGMLTK. One can recognise a PUA domain in the interval 275–355; that stretch reads RGSVYVDEGA…KGVFIHRDDW (81 aa).

The protein belongs to the glutamate 5-kinase family.

It localises to the cytoplasm. The catalysed reaction is L-glutamate + ATP = L-glutamyl 5-phosphate + ADP. Its pathway is amino-acid biosynthesis; L-proline biosynthesis; L-glutamate 5-semialdehyde from L-glutamate: step 1/2. In terms of biological role, catalyzes the transfer of a phosphate group to glutamate to form L-glutamate 5-phosphate. In Neisseria meningitidis serogroup B (strain ATCC BAA-335 / MC58), this protein is Glutamate 5-kinase.